The following is a 137-amino-acid chain: Small ribosomal subunit protein uS12 (137 aa).

The protein belongs to the universal ribosomal protein uS12 family. As to quaternary structure, part of the 30S ribosomal subunit. Contacts proteins S8 and S17. May interact with IF1 in the 30S initiation complex.

With S4 and S5 plays an important role in translational accuracy. Its function is as follows. Interacts with and stabilizes bases of the 16S rRNA that are involved in tRNA selection in the A site and with the mRNA backbone. Located at the interface of the 30S and 50S subunits, it traverses the body of the 30S subunit contacting proteins on the other side and probably holding the rRNA structure together. The combined cluster of proteins S8, S12 and S17 appears to hold together the shoulder and platform of the 30S subunit. The sequence is that of Small ribosomal subunit protein uS12 from Lactiplantibacillus plantarum (strain ATCC BAA-793 / NCIMB 8826 / WCFS1) (Lactobacillus plantarum).